Consider the following 90-residue polypeptide: Probable Fe(2+)-trafficking protein (90 aa).

Belongs to the Fe(2+)-trafficking protein family.

Could be a mediator in iron transactions between iron acquisition and iron-requiring processes, such as synthesis and/or repair of Fe-S clusters in biosynthetic enzymes. This chain is Probable Fe(2+)-trafficking protein, found in Pseudomonas fluorescens (strain SBW25).